We begin with the raw amino-acid sequence, 386 residues long: D-amino-acid oxidase (386 aa).

Positions 14, 15, 16, 17, 39, 40, 51, 52, and 53 each coordinate FAD. Positions 109–138 (SSSPPHPLLPPWVDPSASAAPPRELGTPDT) are disordered. Pro residues predominate over residues 112-121 (PPHPLLPPWV). Positions 174, 175, and 176 each coordinate FAD. The D-serine site is built by tyrosine 253, tyrosine 261, and lysine 332. Positions 261 and 332 each coordinate D-proline. The FAD site is built by lysine 332, glycine 344, isoleucine 345, glycine 362, and alanine 364. Lysine 332 contacts D-dopa. Glycine 362 provides a ligand contact to D-serine. Residue glycine 362 participates in D-proline binding. A D-dopa-binding site is contributed by glycine 362.

The protein belongs to the DAMOX/DASOX family.

The catalysed reaction is a D-alpha-amino acid + O2 + H2O = a 2-oxocarboxylate + H2O2 + NH4(+). It carries out the reaction D-alanine + O2 + H2O = pyruvate + H2O2 + NH4(+). It catalyses the reaction D-aspartate + O2 + H2O = oxaloacetate + H2O2 + NH4(+). In terms of biological role, catalyzes the oxidative deamination of D-amino acids with broad substrate specificity. Enables the organism to utilize D-amino acids as a source of nutrients. The polypeptide is D-amino-acid oxidase (Zea mays (Maize)).